The following is a 115-amino-acid chain: Splicing factor 3B subunit 6-like protein (115 aa).

Residues 9 to 22 (EVNSILFIKNLSFK) form an interaction with pre-mRNA branch site region. The RRM domain maps to 12 to 87 (SILFIKNLSF…RYLVVHYYNP (76 aa)).

Its subcellular location is the nucleus. Functionally, necessary for the splicing of pre-mRNA. The polypeptide is Splicing factor 3B subunit 6-like protein (Schizosaccharomyces pombe (strain 972 / ATCC 24843) (Fission yeast)).